Consider the following 819-residue polypeptide: Protein EFR3 homolog A (819 aa).

Ser-360, Ser-363, Ser-420, and Ser-692 each carry phosphoserine.

The protein belongs to the EFR3 family. As to quaternary structure, component of a phosphatidylinositol 4-kinase (PI4K) complex, composed of PI4KA, EFR3 (EFR3A or EFR3B), TTC7 (TTC7A or TTC7B) and HYCC (HYCC1 or HYCC2). In terms of processing, palmitoylated at its N-terminus, anchoring the protein to the plasma membrane. In terms of tissue distribution, widely expressed. Expressed in neurons of the superior olivary complex of the auditory brainstem. Also expressed at lower levels in the cochlear nucleus, the lateral leminiscal nuclei and the inferior collicus.

It is found in the cell membrane. It localises to the cytoplasm. Its subcellular location is the cytosol. In terms of biological role, component of a complex required to localize phosphatidylinositol 4-kinase (PI4K) to the plasma membrane. The complex acts as a regulator of phosphatidylinositol 4-phosphate (PtdIns(4)P) synthesis. In the complex, EFR3A probably acts as the membrane-anchoring component. Also involved in responsiveness to G-protein-coupled receptors; it is however unclear whether this role is direct or indirect. This chain is Protein EFR3 homolog A, found in Mus musculus (Mouse).